An 819-amino-acid chain; its full sequence is Myosin light chain kinase 3 (819 aa).

A disordered region spans residues 146–460 (VPWRRGSPGD…PGVGNPEPEQ (315 aa)). Phosphoserine is present on S152. Composition is skewed to basic and acidic residues over residues 158–170 (EENKERVEEEGAK) and 183–196 (DAREPGEESQKADV). The segment covering 307–318 (GPGPQCPGPPGL) has biased composition (pro residues). Residues S355, S401, and S408 each carry the phosphoserine modification. Residues 515–770 (VCQHEVLGGG…ATQCLKHEWL (256 aa)) form the Protein kinase domain. Residues 521-529 (LGGGRFGQV) and K544 each bind ATP. Residue D636 is the Proton acceptor of the active site.

Belongs to the protein kinase superfamily. CAMK Ser/Thr protein kinase family. It depends on Mg(2+) as a cofactor. Post-translationally, phosphorylated on serine residues.

It localises to the cytoplasm. The catalysed reaction is L-seryl-[myosin light chain] + ATP = O-phospho-L-seryl-[myosin light chain] + ADP + H(+). The enzyme catalyses L-threonyl-[myosin light chain] + ATP = O-phospho-L-threonyl-[myosin light chain] + ADP + H(+). Its function is as follows. Kinase that phosphorylates MYL2 in vitro. Promotes sarcomere formation in cardiomyocytes and increases cardiomyocyte contractility. The sequence is that of Myosin light chain kinase 3 (MYLK3) from Pongo abelii (Sumatran orangutan).